The primary structure comprises 971 residues: Isoleucine--tRNA ligase (971 aa).

Residues 64 to 74 (PYANGHIHIGH) carry the 'HIGH' region motif. Position 602 (glutamate 602) interacts with L-isoleucyl-5'-AMP. A 'KMSKS' region motif is present at residues 643-647 (KMSKS). Lysine 646 provides a ligand contact to ATP.

The protein belongs to the class-I aminoacyl-tRNA synthetase family. IleS type 1 subfamily. As to quaternary structure, monomer.

It is found in the cytoplasm. It catalyses the reaction tRNA(Ile) + L-isoleucine + ATP = L-isoleucyl-tRNA(Ile) + AMP + diphosphate. Functionally, catalyzes the attachment of isoleucine to tRNA(Ile). As IleRS can inadvertently accommodate and process structurally similar amino acids such as valine, to avoid such errors it has two additional distinct tRNA(Ile)-dependent editing activities. One activity is designated as 'pretransfer' editing and involves the hydrolysis of activated Val-AMP. The other activity is designated 'posttransfer' editing and involves deacylation of mischarged Val-tRNA(Ile). The protein is Isoleucine--tRNA ligase of Bartonella henselae (strain ATCC 49882 / DSM 28221 / CCUG 30454 / Houston 1) (Rochalimaea henselae).